The primary structure comprises 714 residues: Fatty acid oxidation complex subunit alpha (714 aa).

The tract at residues Met-1 to Pro-190 is enoyl-CoA hydratase. Residues Ala-306 to Gln-714 form a 3-hydroxyacyl-CoA dehydrogenase region.

In the N-terminal section; belongs to the enoyl-CoA hydratase/isomerase family. The protein in the central section; belongs to the 3-hydroxyacyl-CoA dehydrogenase family. In terms of assembly, heterotetramer of two alpha chains (FadJ) and two beta chains (FadI).

It is found in the cytoplasm. The catalysed reaction is a (3S)-3-hydroxyacyl-CoA = a (2E)-enoyl-CoA + H2O. The enzyme catalyses a 4-saturated-(3S)-3-hydroxyacyl-CoA = a (3E)-enoyl-CoA + H2O. It carries out the reaction a (3S)-3-hydroxyacyl-CoA + NAD(+) = a 3-oxoacyl-CoA + NADH + H(+). It catalyses the reaction (3S)-3-hydroxybutanoyl-CoA = (3R)-3-hydroxybutanoyl-CoA. It functions in the pathway lipid metabolism; fatty acid beta-oxidation. In terms of biological role, catalyzes the formation of a hydroxyacyl-CoA by addition of water on enoyl-CoA. Also exhibits 3-hydroxyacyl-CoA epimerase and 3-hydroxyacyl-CoA dehydrogenase activities. This is Fatty acid oxidation complex subunit alpha from Shigella flexneri.